The following is a 265-amino-acid chain: Ribosomal RNA small subunit methyltransferase G (265 aa).

S-adenosyl-L-methionine contacts are provided by G75, L80, and R145. The interval 212–265 (RAVRSSQRTRAESRGGRGDGERHDGRQVRRTSRDSLRSREVGRDQPTRGQSRST) is disordered. The span at 220 to 257 (TRAESRGGRGDGERHDGRQVRRTSRDSLRSREVGRDQP) shows a compositional bias: basic and acidic residues.

The protein belongs to the methyltransferase superfamily. RNA methyltransferase RsmG family.

Its subcellular location is the cytoplasm. Functionally, specifically methylates the N7 position of guanine in position 518 of 16S rRNA. In Frankia casuarinae (strain DSM 45818 / CECT 9043 / HFP020203 / CcI3), this protein is Ribosomal RNA small subunit methyltransferase G.